The primary structure comprises 1009 residues: Membrane alanyl aminopeptidase (1009 aa).

The N-terminal stretch at 1-15 (MAAIKLLVLSLACAC) is a signal peptide. Residues 16–52 (VIAHSPIPPASRTIFLDERLEGGAFENIDAFENIELS) constitute a propeptide, activation peptide. Substrate is bound at residue 338 to 342 (GAMEN). Histidine 374 serves as a coordination point for Zn(2+). Glutamate 375 (proton acceptor) is an active-site residue. The Zn(2+) site is built by histidine 378 and glutamate 397. Asparagine 906 carries an N-linked (GlcNAc...) asparagine glycan. Residues 955-980 (PSTSTTSTTAAPTTVTQPTITEPSTP) are disordered. Aspartate 987 carries GPI-anchor amidated aspartate lipidation. Residues 988–1009 (SAMTSFASLFIISLGAILHLIL) constitute a propeptide, removed in mature form.

Belongs to the peptidase M1 family. Zn(2+) is required as a cofactor.

It localises to the cell membrane. In terms of biological role, binds to the B.thuringiensis toxin, CryIA(C). This chain is Membrane alanyl aminopeptidase, found in Heliothis virescens (Tobacco budworm moth).